Reading from the N-terminus, the 804-residue chain is MAAGQKKYICSFCLKPFSRSEHKIRHERSHAGVKPFQCQVCKHSFVRRDLLQRHIRTVHRTFLLSSYASMTGDKADIPVSLGVGDVDSTSPRDIKMETLVNSMIKVNSGLINIHYHSSNVEKMDKQQRCVIGKESSSLKKGKSRFKQVKSRLESSISVKILQEYSLDFISSRDILTFFRMGVSHLVENKIFQNFFPDLFSSLQNDELVESFWINKPFGLIIACLGMSISLNQDSQKLWFICCTNLYASSSKHDNDFDTEDILSQTEQHDVFALILFYSLLVMLENNIPVSNSIKKFDVFSMLQDILKPFTVASSSYHYLNSKENAWFIFDLWVNILRDSNNFNNDSLLIFGWFVNQEFISSNPLKDFIYKGPSMSTTDLTLKHINILADSAYVYFIIKKTYPQELPSDFRVHDLLVYLNECFVMQQPIKPETSANPSLFANVMNARITDCKSKSNWLLWETIWFEFINNLTLRNGTTRNIWFIDNFPQVSTSCLLHHSSSFVDETLITTNLSIISMLLNLKSFTLASLNPRNIQLITDIVSFQLKLFSSELIASSDVSPSQVSQLLVNPNVHLMLYFWFDTIYVQRQSYLSSTEKEEFEKVEVFVNDYIITHQKNLVTDLHSILFDFWSDSFIAYHILLHAIVSSLRDNILYPYLIYSPHLNDQTKALLTDISNWSCFALQQPFRKTSRGSLSGASDMKSFSVASCLPLSPNFLKRDSNCNKILLPPLDIKAIEPISTSNYTYVNSAPKQQEKEQPLLRATGNNINLVQTIVVPPQVNMESQEFSASSTDNKQSKNIEIFSQIK.

2 consecutive C2H2-type zinc fingers follow at residues Y8–H30 and F36–H59. Residues Q782–N796 show a composition bias toward polar residues. The segment at Q782 to K804 is disordered.

The protein localises to the nucleus. The polypeptide is Zinc finger protein YGR067C (Saccharomyces cerevisiae (strain ATCC 204508 / S288c) (Baker's yeast)).